Consider the following 1150-residue polypeptide: MKLSRQFTVFGSAIFCVVIFSLYLMLDRGHLDYPRGPRQEGSFPQGQLSILQEKIDHLERLLAENNEIISNIRDSVINLSESVEDGPRGSPGNASQGSIHLHSPQLALQADPRDCLFASQSGSQPRDVQMLDVYDLIPFDNPDGGVWKQGFDIKYEADEWDHEPLQVFVVPHSHNDPGWLKTFNDYFRDKTQYIFNNMVLKLKEDSSRKFMWSEISYLAKWWDIIDIPKKEAVKSLLQNGQLEIVTGGWVMPDEATPHYFALIDQLIEGHQWLEKNLGVKPRSGWAIDPFGHSPTMAYLLKRAGFSHMLIQRVHYAIKKHFSLHKTLEFFWRQNWDLGSATDILCHMMPFYSYDIPHTCGPDPKICCQFDFKRLPGGRYGCPWGVPPEAISPGNVQSRAQMLLDQYRKKSKLFRTKVLLAPLGDDFRFSEYTEWDLQCRNYEQLFSYMNSQPHLKVKIQFGTLSDYFDALEKAVAAEKKSSQSVFPALSGDFFTYADRDDHYWSGYFTSRPFYKRMDRIMESRIRAAEILYQLALKQAQKYKINKFLSSPHYTTLTEARRNLGLFQHHDAITGTAKDWVVVDYGTRLFQSLNSLEKIIGDSAFLLILKDKKLYQSDPSKAFLEMDTKQSSQDSLPQKIIIQLSAQEPRYLVVYNPFEQERHSVVSIRVNSATVKVLSDSGKPVEVQVSAVWNDMRTISQAAYEVSFLAHIPPLGLKVFKILESQSSSSHLADYVLYNNDGLAENGIFHVKNMVDAGDAITIENPFLAIWFDRSGLMEKVRRKEDSRQHELKVQFLWYGTTNKRDKSGAYLFLPDGQGQPYVSLRPPFVRVTRGRIYSDVTCFLEHVTHKVRLYNIQGIEGQSMEVSNIVNIRNVHNREIVMRISSKINNQNRYYTDLNGYQIQPRRTMSKLPLQANVYPMCTMAYIQDAEHRLTLLSAQSLGASSMASGQIEVFMDRRLMQDDNRGLGQGVHDNKITANLFRILLEKRSAVNMEEEKKSPVSYPSLLSHMTSSFLNHPFLPMVLSGQLPSPAFELLSEFPLLQSSLPCDIHLVNLRTIQSKMGKGYSDEAALILHRKGFDCQFSSRGIGLPCSTTQGKMSVLKLFNKFAVESLVPSSLSLMHSPPDAQNMSEVSLSPMEISTFRIRLRWT.

The Cytoplasmic segment spans residues 1–5 (MKLSR). Residues 6–26 (QFTVFGSAIFCVVIFSLYLML) form a helical; Signal-anchor for type II membrane protein membrane-spanning segment. Topologically, residues 27 to 1150 (DRGHLDYPRG…STFRIRLRWT (1124 aa)) are lumenal. Asn78 is a glycosylation site (N-linked (GlcNAc...) asparagine). Residues Ser80 and Ser82 each carry the phosphoserine modification. Asn93 is a glycosylation site (N-linked (GlcNAc...) asparagine). His174, Asp176, Asp288, and His568 together coordinate Zn(2+). Residue Asp288 is the Nucleophile of the active site. Residue Asn1129 is glycosylated (N-linked (GlcNAc...) asparagine).

The protein belongs to the glycosyl hydrolase 38 family. In terms of assembly, homodimer; disulfide-linked. It depends on Zn(2+) as a cofactor. Post-translationally, glycosylated. In terms of tissue distribution, all tissues, mostly in adrenal and thymus.

Its subcellular location is the golgi apparatus membrane. The catalysed reaction is N(4)-{beta-D-GlcNAc-(1-&gt;2)-alpha-D-Man-(1-&gt;3)-[alpha-D-Man-(1-&gt;3)-[alpha-D-Man-(1-&gt;6)]-alpha-D-Man-(1-&gt;6)]-beta-D-Man-(1-&gt;4)-beta-D-GlcNAc-(1-&gt;4)-beta-D-GlcNAc}-L-asparaginyl-[protein] + 2 H2O = 2 alpha-D-mannopyranose + an N(4)-{beta-D-GlcNAc-(1-&gt;2)-alpha-D-Man-(1-&gt;3)-[alpha-D-Man-(1-&gt;6)]-beta-D-Man-(1-&gt;4)-beta-D-GlcNAc-(1-&gt;4)-beta-D-GlcNAc}-L-asparaginyl-[protein]. It functions in the pathway protein modification; protein glycosylation. In terms of biological role, catalyzes the first committed step in the biosynthesis of complex N-glycans. It controls conversion of high mannose to complex N-glycans; the final hydrolytic step in the N-glycan maturation pathway. The chain is Alpha-mannosidase 2 (Man2a1) from Mus musculus (Mouse).